The chain runs to 104 residues: Cell division protein FtsL (104 aa).

The Cytoplasmic portion of the chain corresponds to 1–19; the sequence is MSTPNTHLLCLIATDLRKH. A helical membrane pass occupies residues 20–39; the sequence is FFAVLVGMLIVCSAIYNVYT. Topologically, residues 40-104 are periplasmic; the sequence is THKTRGLVTQ…KKNSVLVELR (65 aa).

This sequence belongs to the FtsL family. Part of a complex composed of FtsB, FtsL and FtsQ.

The protein localises to the cell inner membrane. Essential cell division protein. May link together the upstream cell division proteins, which are predominantly cytoplasmic, with the downstream cell division proteins, which are predominantly periplasmic. In Psychromonas ingrahamii (strain DSM 17664 / CCUG 51855 / 37), this protein is Cell division protein FtsL.